Consider the following 246-residue polypeptide: MTSEAAPASTAVTYKRVMLKISGEALMGDQGYGLHPPTVQRIAREVQAVHRLGVEICMVIGGGNIFRGLQGSAQGMERTTADYMGMLATVMNALAMQAALESLGIFTRVISAIPMDQVCEPYIRRRAVRHLEKKRVCIFAAGTGNPYFTTDTAATLRANEMACQAIFKGTKVDGVYDKDPRKFADARRYETVSYDECLQKHLGVMDASAIALARDNDLPIIVFSLDEPGGFCGILRGEGTYTRVQG.

Position 20–23 (20–23 (KISG)) interacts with ATP. The tract at residues 28–33 (GDQGYG) is involved in allosteric activation by GTP. G62 contacts UMP. 2 residues coordinate ATP: G63 and R67. UMP contacts are provided by residues D82 and 143 to 150 (TGNPYFTT). ATP is bound by residues T170, Y176, and D179.

This sequence belongs to the UMP kinase family. As to quaternary structure, homohexamer.

It is found in the cytoplasm. It carries out the reaction UMP + ATP = UDP + ADP. It participates in pyrimidine metabolism; CTP biosynthesis via de novo pathway; UDP from UMP (UMPK route): step 1/1. Allosterically activated by GTP. Inhibited by UTP. In terms of biological role, catalyzes the reversible phosphorylation of UMP to UDP. This is Uridylate kinase from Cereibacter sphaeroides (strain ATCC 17025 / ATH 2.4.3) (Rhodobacter sphaeroides).